Here is a 170-residue protein sequence, read N- to C-terminus: Protein SOB FIVE-LIKE 5 (170 aa).

The SOFL-A motif lies at 10-15 (SGWTLY). The disordered stretch occupies residues 17–78 (DQSVSSPSPS…GPRNISEEDS (62 aa)). The segment covering 35–44 (DSRRRSKDSW) has biased composition (basic and acidic residues). Residues 61 to 70 (SMISDASSGP) carry the SOFL-B motif. Positions 79 to 86 (VKKINIVG) match the Nuclear localization signal motif.

The protein belongs to the SOFL plant protein family. In terms of tissue distribution, expressed in seedlings, roots, flowers and siliques. Barely detectable in leaves.

The protein resides in the cytoplasm. It localises to the nucleus. Its function is as follows. Involved in cytokinin-mediated development. In Arabidopsis thaliana (Mouse-ear cress), this protein is Protein SOB FIVE-LIKE 5.